Consider the following 742-residue polypeptide: MADILSQSETLASQDLSGDFKKPALPVSPAARSKAPASSSSNPEEVQKEGPTALQDSNSGEPDIPPPQPDCGDFRSLQEEQSRPPTAVSSPGGPARAPPYQEPPWGGPATAPYSLETLKGGTILGTRSLKGTSYCLFGRLSGCDVCLEHPSVSRYHAVLQHRASGPDGECDSNGPGFYLYDLGSTHGTFLNKTRIPPRTYCRVHVGHVVRFGGSTRLFILQGPEEDREAESELTVTQLKELRKQQQILLEKKMLGEDSDEEEEMDTSERKINAGSQDDEMGCTWGMGEDAVEDDAEENPIVLEFQQEREAFYIKDPKKALQGFFDREGEELEYEFDEQGHSTWLCRVRLPVDDSTGKQLVAEAIHSGKKKEAMIQCSLEACRILDTLGLLRQEAVSRKRKAKNWEDEDFYDSDDDTFLDRTGLIEKKRLNRMKKAGKIDEKPETFESLVAKLNDAERELSEISERLKASSQVLSESPSQDSLDAFMSEMKSGSTLDGVSRKKLHLRTFELRKEQQRLKGLIKIVKPAEIPELKKTETQTTGAENKAKKLTLPLFGAMKGGSKFKLKTGTVGKLPPKRPELPPTLMRMKDEPEVEEEEEEEEEEEKEKEEHEKKKLEDGSLSRPQPEIEPEAAVQEMRPPTDLTHFKETQTHENMSQLSEEEQNKDYQDCSKTTSLCAGPSASKNEYEKSRGELKKKKTPGPGKLPPTLSSKYPEDDPDYCVWVPPEGQSGDGRTHLNDKYGY.

Over residues 1 to 16 the composition is skewed to polar residues; that stretch reads MADILSQSETLASQDL. A disordered region spans residues 1–112; sequence MADILSQSET…PPWGGPATAP (112 aa). The segment covering 27-43 has biased composition (low complexity); sequence VSPAARSKAPASSSSNP. At Ser28 the chain carries Phosphoserine. Residues 72 to 82 show a composition bias toward basic and acidic residues; that stretch reads GDFRSLQEEQS. Ser90 carries the post-translational modification Phosphoserine. Residues 96 to 106 are compositionally biased toward pro residues; it reads RAPPYQEPPWG. The FHA domain maps to 135 to 195; the sequence is CLFGRLSGCD…HGTFLNKTRI (61 aa). A disordered region spans residues 254–282; the sequence is LGEDSDEEEEMDTSERKINAGSQDDEMGC. Positions 256-265 are enriched in acidic residues; it reads EDSDEEEEMD. Residues Ser258 and Ser412 each carry the phosphoserine modification. Lys441 participates in a covalent cross-link: Glycyl lysine isopeptide (Lys-Gly) (interchain with G-Cter in SUMO2). Residues 443–476 adopt a coiled-coil conformation; sequence ETFESLVAKLNDAERELSEISERLKASSQVLSES. Residue Ser476 is modified to Phosphoserine. The tract at residues 565-742 is disordered; sequence LKTGTVGKLP…RTHLNDKYGY (178 aa). The span at 591–606 shows a compositional bias: acidic residues; sequence PEVEEEEEEEEEEEKE. A compositionally biased stretch (basic and acidic residues) spans 607–619; the sequence is KEEHEKKKLEDGS. Phosphoserine is present on residues Ser655 and Ser658. Residues 699–708 show a composition bias toward low complexity; that stretch reads PGPGKLPPTL. Basic and acidic residues predominate over residues 732–742; that stretch reads GRTHLNDKYGY.

Ubiquitously expressed.

The protein resides in the nucleus. The protein localises to the cytoplasm. The chain is Kanadaptin (SLC4A1AP) from Homo sapiens (Human).